The primary structure comprises 124 residues: Small ribosomal subunit protein uS12 (124 aa).

A 3-methylthioaspartic acid modification is found at Asp-89. Lys-108 carries the post-translational modification N6-acetyllysine.

It belongs to the universal ribosomal protein uS12 family. Part of the 30S ribosomal subunit. Contacts proteins S8 and S17. May interact with IF1 in the 30S initiation complex.

Its function is as follows. With S4 and S5 plays an important role in translational accuracy. Interacts with and stabilizes bases of the 16S rRNA that are involved in tRNA selection in the A site and with the mRNA backbone. Located at the interface of the 30S and 50S subunits, it traverses the body of the 30S subunit contacting proteins on the other side and probably holding the rRNA structure together. The combined cluster of proteins S8, S12 and S17 appears to hold together the shoulder and platform of the 30S subunit. The chain is Small ribosomal subunit protein uS12 from Escherichia coli O139:H28 (strain E24377A / ETEC).